Reading from the N-terminus, the 152-residue chain is Ribosome maturation factor RimP (152 aa).

Belongs to the RimP family.

It localises to the cytoplasm. Its function is as follows. Required for maturation of 30S ribosomal subunits. In Alkaliphilus metalliredigens (strain QYMF), this protein is Ribosome maturation factor RimP.